The following is a 342-amino-acid chain: N-acetyl-gamma-glutamyl-phosphate reductase (342 aa).

The active site involves C146.

This sequence belongs to the NAGSA dehydrogenase family. Type 1 subfamily.

The protein resides in the cytoplasm. It catalyses the reaction N-acetyl-L-glutamate 5-semialdehyde + phosphate + NADP(+) = N-acetyl-L-glutamyl 5-phosphate + NADPH + H(+). The protein operates within amino-acid biosynthesis; L-arginine biosynthesis; N(2)-acetyl-L-ornithine from L-glutamate: step 3/4. Catalyzes the NADPH-dependent reduction of N-acetyl-5-glutamyl phosphate to yield N-acetyl-L-glutamate 5-semialdehyde. The chain is N-acetyl-gamma-glutamyl-phosphate reductase from Frankia casuarinae (strain DSM 45818 / CECT 9043 / HFP020203 / CcI3).